The sequence spans 429 residues: Glutamyl-tRNA reductase (429 aa).

Substrate-binding positions include 50–53 (TCNR), S116, 121–123 (EPQ), and Q127. The active-site Nucleophile is C51. NADP(+) is bound at residue 196 to 201 (GAGEMA).

This sequence belongs to the glutamyl-tRNA reductase family. In terms of assembly, homodimer.

The enzyme catalyses (S)-4-amino-5-oxopentanoate + tRNA(Glu) + NADP(+) = L-glutamyl-tRNA(Glu) + NADPH + H(+). Its pathway is porphyrin-containing compound metabolism; protoporphyrin-IX biosynthesis; 5-aminolevulinate from L-glutamyl-tRNA(Glu): step 1/2. Functionally, catalyzes the NADPH-dependent reduction of glutamyl-tRNA(Glu) to glutamate 1-semialdehyde (GSA). This chain is Glutamyl-tRNA reductase, found in Thermodesulfovibrio yellowstonii (strain ATCC 51303 / DSM 11347 / YP87).